The following is a 1295-amino-acid chain: Phosphoribosylformylglycinamidine synthase (1295 aa).

Residues 305–327 form a disordered region; that stretch reads WPGAATGSGGEIRDEGATGRGAK. ATP is bound by residues 307–318, 386–388, and alanine 678; these read GAATGSGGEIRD and TGY. Positions 679, 718, 722, and 884 each coordinate Mg(2+). Serine 886 contacts ATP. A Glutamine amidotransferase type-1 domain is found at 1042 to 1295; the sequence is VAVLREQGVN…IFRNARKQLG (254 aa). Residue cysteine 1135 is the Nucleophile of the active site. Catalysis depends on residues histidine 1260 and glutamate 1262.

This sequence in the N-terminal section; belongs to the FGAMS family. In terms of assembly, monomer.

The protein resides in the cytoplasm. It carries out the reaction N(2)-formyl-N(1)-(5-phospho-beta-D-ribosyl)glycinamide + L-glutamine + ATP + H2O = 2-formamido-N(1)-(5-O-phospho-beta-D-ribosyl)acetamidine + L-glutamate + ADP + phosphate + H(+). It participates in purine metabolism; IMP biosynthesis via de novo pathway; 5-amino-1-(5-phospho-D-ribosyl)imidazole from N(2)-formyl-N(1)-(5-phospho-D-ribosyl)glycinamide: step 1/2. Functionally, phosphoribosylformylglycinamidine synthase involved in the purines biosynthetic pathway. Catalyzes the ATP-dependent conversion of formylglycinamide ribonucleotide (FGAR) and glutamine to yield formylglycinamidine ribonucleotide (FGAM) and glutamate. This is Phosphoribosylformylglycinamidine synthase from Salmonella typhimurium (strain LT2 / SGSC1412 / ATCC 700720).